A 250-amino-acid polypeptide reads, in one-letter code: LOB domain-containing protein 37 (250 aa).

An LOB domain is found at 1-107 (MSCNGCRVLR…VETVLRGGSL (107 aa)). The disordered stretch occupies residues 145-227 (DSTDRNIYHH…DSGTTTTTTA (83 aa)). The segment covering 157–170 (FSSSRSRSTMDSSS) has biased composition (low complexity).

It belongs to the LOB domain-containing protein family. Expressed in young shoots, roots, stems, leaves and flowers.

This is LOB domain-containing protein 37 (LBD37) from Arabidopsis thaliana (Mouse-ear cress).